The chain runs to 449 residues: Trigger factor (449 aa).

The 86-residue stretch at 173–258 (GDRVTVDFVG…LKKVEWPHLP (86 aa)) folds into the PPIase FKBP-type domain.

This sequence belongs to the FKBP-type PPIase family. Tig subfamily.

It localises to the cytoplasm. It catalyses the reaction [protein]-peptidylproline (omega=180) = [protein]-peptidylproline (omega=0). In terms of biological role, involved in protein export. Acts as a chaperone by maintaining the newly synthesized protein in an open conformation. Functions as a peptidyl-prolyl cis-trans isomerase. In Burkholderia pseudomallei (strain 1710b), this protein is Trigger factor.